A 237-amino-acid chain; its full sequence is Ubiquinone biosynthesis O-methyltransferase (237 aa).

S-adenosyl-L-methionine contacts are provided by Arg38, Gly58, Asp79, and Met124.

Belongs to the methyltransferase superfamily. UbiG/COQ3 family.

It catalyses the reaction a 3-demethylubiquinol + S-adenosyl-L-methionine = a ubiquinol + S-adenosyl-L-homocysteine + H(+). The enzyme catalyses a 3-(all-trans-polyprenyl)benzene-1,2-diol + S-adenosyl-L-methionine = a 2-methoxy-6-(all-trans-polyprenyl)phenol + S-adenosyl-L-homocysteine + H(+). It functions in the pathway cofactor biosynthesis; ubiquinone biosynthesis. Functionally, O-methyltransferase that catalyzes the 2 O-methylation steps in the ubiquinone biosynthetic pathway. The polypeptide is Ubiquinone biosynthesis O-methyltransferase (Acinetobacter baumannii (strain ACICU)).